A 114-amino-acid chain; its full sequence is Superoxide dismutase [Cu-Zn] (114 aa).

The Cu cation site is built by H37, H39, and H54. The disordered stretch occupies residues 48–68 (CMSSGPHFNPRNKEHGAPTDE). H54, H62, H71, and D74 together coordinate Zn(2+). The span at 58-68 (RNKEHGAPTDE) shows a compositional bias: basic and acidic residues. A Cu cation-binding site is contributed by H111.

Belongs to the Cu-Zn superoxide dismutase family. As to quaternary structure, homodimer. Requires Cu cation as cofactor. Zn(2+) is required as a cofactor.

The protein resides in the cytoplasm. The catalysed reaction is 2 superoxide + 2 H(+) = H2O2 + O2. Its function is as follows. Destroys radicals which are normally produced within the cells and which are toxic to biological systems. The chain is Superoxide dismutase [Cu-Zn] from Drosophila miranda (Fruit fly).